The primary structure comprises 144 residues: MVIPLRNKYGILFLIAVCIMVSGCQQQKEETPFYYGTWDEGRAPGPTDGVKSATVTFTEDEVVETEVMEGRGEVQLPFMAYKVISQSTDGSIEIQYLGPYYPLKSTLKRGENGTLIWEQNGQRKTMTRIESKTGREEKDEKSKS.

The first 23 residues, 1 to 23 (MVIPLRNKYGILFLIAVCIMVSG), serve as a signal peptide directing secretion. The interval 119–144 (QNGQRKTMTRIESKTGREEKDEKSKS) is disordered. A compositionally biased stretch (basic and acidic residues) spans 127 to 144 (TRIESKTGREEKDEKSKS).

This is an uncharacterized protein from Bacillus subtilis (strain 168).